Reading from the N-terminus, the 381-residue chain is Prokineticin receptor 2 (381 aa).

At 1-51 the chain is on the extracellular side; it reads MGPQNRNTSFAPDLNPPQDHVSLNYSYGDYDLPLGEDEDVTKTQTFFAAKI. N-linked (GlcNAc...) asparagine glycans are attached at residues Asn7 and Asn24. A helical transmembrane segment spans residues 52 to 72; it reads VIGVALAGIMLVCGIGNFVFI. Residues 73–86 are Cytoplasmic-facing; it reads AALARYKKLRNLTN. Residues 87-107 traverse the membrane as a helical segment; sequence LLIANLAISDFLVAIVCCPFE. The Extracellular portion of the chain corresponds to 108 to 133; the sequence is MDYYVVRQLSWAHGHVLCASVNYLRT. Cys125 and Cys205 are joined by a disulfide. Residues 134–154 traverse the membrane as a helical segment; the sequence is VSLYVSTNALLAIAIDRYLAI. Residues 155–168 lie on the Cytoplasmic side of the membrane; the sequence is VHPLKPRMNYQTAS. A helical membrane pass occupies residues 169–189; sequence FLIALVWMVSILIAVPSAYFT. Over 190–220 the chain is Extracellular; the sequence is TETILVIVKNQEKIFCGQIWSVDQQLYYKSY. The helical transmembrane segment at 221–241 threads the bilayer; sequence FLFVFGLEFVGPVVTMTLCYA. Topologically, residues 242–270 are cytoplasmic; it reads RISQELWFKAVPGFQTEQIRKRLRCRRKT. A helical transmembrane segment spans residues 271–291; that stretch reads VLLLMGILTAYVLCWAPFYGF. Residues 292–310 lie on the Extracellular side of the membrane; it reads TIVRDFFPTVVVKEKHYLT. Residues 311-331 form a helical membrane-spanning segment; that stretch reads AFYVVECIAMSNSMINTICFV. The Cytoplasmic portion of the chain corresponds to 332–381; it reads TVKNNTMKYFKKMLRLHWRPSHYGSKSSADLDLKTSGVPATEEVDCIRLK.

Belongs to the G-protein coupled receptor 1 family. As to quaternary structure, homodimer. In terms of tissue distribution, expressed in several regions of the brain, including paraventricular hypothalamic nucleus, dorsal medial hypothalamic nucleus, paratenial thalamic nuclei, paracentral thalamic nucleus, lateral habenular nucleus, lateral septal nucleus, lateral globus pallidus and amygdala. Highest expression seen in paraventricular thalamic nuclei and is also extensively expressed in the suprachiasmatic nucleus.

It is found in the cell membrane. Receptor for prokineticin 2. Exclusively coupled to the G(q) subclass of heteromeric G proteins. Activation leads to mobilization of calcium, stimulation of phosphoinositide turnover and activation of p44/p42 mitogen-activated protein kinase. The chain is Prokineticin receptor 2 (Prokr2) from Mus musculus (Mouse).